Reading from the N-terminus, the 255-residue chain is MWIGIISLFPEMFRAITDYGVTGRAVKKGLLNIQSWSPRDFAHDRHRTVDERPYGGGPGMLMMVQPLRDAIHTAKAAAGEGAKVIYLSPQGRKLDQAGVSELATNQKLILVCGRYEGIDERVIQTEIDEEWSIGDYVLSGGELPAMTLIDSVARFIPGVLGHEASATEDSFADGLLDCPHYTRPEVLEGMEVPAVLLSGNHAEIRRWRLKQSLGRTWLRRPELLENLALTEEQAKLLAEFKKEHAHQQHKHDGMA.

S-adenosyl-L-methionine contacts are provided by residues Gly113 and 133–138 (IGDYVL).

Belongs to the RNA methyltransferase TrmD family. As to quaternary structure, homodimer.

The protein localises to the cytoplasm. It catalyses the reaction guanosine(37) in tRNA + S-adenosyl-L-methionine = N(1)-methylguanosine(37) in tRNA + S-adenosyl-L-homocysteine + H(+). Specifically methylates guanosine-37 in various tRNAs. This is tRNA (guanine-N(1)-)-methyltransferase from Enterobacter sp. (strain 638).